The sequence spans 101 residues: Large ribosomal subunit protein bL28 (101 aa).

The protein belongs to the bacterial ribosomal protein bL28 family.

The sequence is that of Large ribosomal subunit protein bL28 from Methylorubrum populi (strain ATCC BAA-705 / NCIMB 13946 / BJ001) (Methylobacterium populi).